A 115-amino-acid polypeptide reads, in one-letter code: Phosphoribosyl-ATP pyrophosphatase (115 aa).

The protein belongs to the PRA-PH family.

The protein localises to the cytoplasm. It catalyses the reaction 1-(5-phospho-beta-D-ribosyl)-ATP + H2O = 1-(5-phospho-beta-D-ribosyl)-5'-AMP + diphosphate + H(+). Its pathway is amino-acid biosynthesis; L-histidine biosynthesis; L-histidine from 5-phospho-alpha-D-ribose 1-diphosphate: step 2/9. In Bordetella bronchiseptica (strain ATCC BAA-588 / NCTC 13252 / RB50) (Alcaligenes bronchisepticus), this protein is Phosphoribosyl-ATP pyrophosphatase.